Here is a 110-residue protein sequence, read N- to C-terminus: Small ribosomal subunit protein mS33 (110 aa).

Residues Lys-84–Lys-95 are compositionally biased toward basic residues. Residues Lys-84–Lys-110 form a disordered region.

It belongs to the mitochondrion-specific ribosomal protein mS33 family. As to quaternary structure, component of the mitochondrial small ribosomal subunit (mt-SSU). Mature yeast 74S mitochondrial ribosomes consist of a small (37S) and a large (54S) subunit. The 37S small subunit contains a 15S ribosomal RNA (15S mt-rRNA) and 34 different proteins. The 54S large subunit contains a 21S rRNA (21S mt-rRNA) and 46 different proteins.

Its subcellular location is the mitochondrion. Functionally, component of the mitochondrial ribosome (mitoribosome), a dedicated translation machinery responsible for the synthesis of mitochondrial genome-encoded proteins, including at least some of the essential transmembrane subunits of the mitochondrial respiratory chain. The mitoribosomes are attached to the mitochondrial inner membrane and translation products are cotranslationally integrated into the membrane. This is Small ribosomal subunit protein mS33 (RSM27) from Saccharomyces cerevisiae (strain ATCC 204508 / S288c) (Baker's yeast).